Consider the following 538-residue polypeptide: Bifunctional purine biosynthesis protein PurH (538 aa).

An MGS-like domain is found at 8–158; that stretch reads IPAPDKVEIK…KNHAYVTTLT (151 aa).

Belongs to the PurH family.

It catalyses the reaction (6R)-10-formyltetrahydrofolate + 5-amino-1-(5-phospho-beta-D-ribosyl)imidazole-4-carboxamide = 5-formamido-1-(5-phospho-D-ribosyl)imidazole-4-carboxamide + (6S)-5,6,7,8-tetrahydrofolate. The catalysed reaction is IMP + H2O = 5-formamido-1-(5-phospho-D-ribosyl)imidazole-4-carboxamide. It participates in purine metabolism; IMP biosynthesis via de novo pathway; 5-formamido-1-(5-phospho-D-ribosyl)imidazole-4-carboxamide from 5-amino-1-(5-phospho-D-ribosyl)imidazole-4-carboxamide (10-formyl THF route): step 1/1. It functions in the pathway purine metabolism; IMP biosynthesis via de novo pathway; IMP from 5-formamido-1-(5-phospho-D-ribosyl)imidazole-4-carboxamide: step 1/1. In Rhizobium johnstonii (strain DSM 114642 / LMG 32736 / 3841) (Rhizobium leguminosarum bv. viciae), this protein is Bifunctional purine biosynthesis protein PurH.